Here is a 160-residue protein sequence, read N- to C-terminus: Small ribosomal subunit protein uS7 (160 aa).

Belongs to the universal ribosomal protein uS7 family. In terms of assembly, part of the 30S ribosomal subunit. Contacts proteins S9 and S11.

Functionally, one of the primary rRNA binding proteins, it binds directly to 16S rRNA where it nucleates assembly of the head domain of the 30S subunit. Is located at the subunit interface close to the decoding center, probably blocks exit of the E-site tRNA. The protein is Small ribosomal subunit protein uS7 of Ehrlichia ruminantium (strain Gardel).